A 372-amino-acid polypeptide reads, in one-letter code: GTPase Obg (372 aa).

The Obg domain maps to 1–159 (MAFVDEAKFF…KWLLIELKLM (159 aa)). Residues 121–141 (GSGGMGNPHFSSGSNRTPRVA) form a disordered region. In terms of domain architecture, OBG-type G spans 160–329 (ADVGLVGLPN…LVKLIGDIID (170 aa)). GTP is bound by residues 166-173 (GLPNAGKS), 191-195 (FTTLE), 213-216 (DIPG), 280-283 (NKCD), and 310-312 (SAI). Mg(2+)-binding residues include serine 173 and threonine 193. The segment at 346–372 (QDLKKQKEEERRQELKKQKEEEQAKDE) is disordered.

It belongs to the TRAFAC class OBG-HflX-like GTPase superfamily. OBG GTPase family. Monomer. Mg(2+) serves as cofactor.

Its subcellular location is the cytoplasm. Functionally, an essential GTPase which binds GTP, GDP and possibly (p)ppGpp with moderate affinity, with high nucleotide exchange rates and a fairly low GTP hydrolysis rate. Plays a role in control of the cell cycle, stress response, ribosome biogenesis and in those bacteria that undergo differentiation, in morphogenesis control. This chain is GTPase Obg, found in Desulfotalea psychrophila (strain LSv54 / DSM 12343).